The following is a 663-amino-acid chain: Methionine--tRNA ligase (663 aa).

A 'HIGH' region motif is present at residues 13 to 23; sequence PYTNGPCHLGH. Zn(2+) contacts are provided by Cys144, Cys147, Cys156, and Cys160. A 'KMSKS' region motif is present at residues 326–330; sequence KFSKS. ATP is bound at residue Lys329. The tRNA-binding domain occupies 565–663; the sequence is EFGKMKLIVG…QAVEPGTPIR (99 aa).

Belongs to the class-I aminoacyl-tRNA synthetase family. MetG type 1 subfamily. As to quaternary structure, homodimer. Requires Zn(2+) as cofactor.

The protein localises to the cytoplasm. It carries out the reaction tRNA(Met) + L-methionine + ATP = L-methionyl-tRNA(Met) + AMP + diphosphate. Is required not only for elongation of protein synthesis but also for the initiation of all mRNA translation through initiator tRNA(fMet) aminoacylation. The protein is Methionine--tRNA ligase of Methanosphaerula palustris (strain ATCC BAA-1556 / DSM 19958 / E1-9c).